A 475-amino-acid chain; its full sequence is MAAGALRGLPVAGGGESSESEDDGWEIGYLDRTSQKLKGLLPIEEKKEKFKKAMTIGDVSLVQELLDSGISVDSTFQYGWTPLMYAASVANAELVRVLLDRGANASFEKDKQSILITACSAHGSEELILKCVELLLSRNADPNVACRRLMTPIMYAARDGHTQVVALLVAHGAEVNTQDENGYTALTWAARQGHKNIVLKLLELGANKMLQTKDGKMPSEIAKRNKHHEIFNLLSFTLNPLEGKLQQLTKEDTICKILTTDSDREKDHIFSSYTAFGDLEVFLHGLGLEHMTDLLKERDITLRHLLTMREDEFTKNGITSKDQQKILAALKELQVEEIQFGELSEETKLEISGDEFLNFLLKLNKQCGHLITAVQNVITELPVNSQKITLEWASPRNFTSVCEELVNNVEDLSEEVCKLKDLIQKLQNERENDPTHIQLREEVSTWNSRILKRTAIAVCGFGFLLFICKLTFQRK.

Positions 1-25 (MAAGALRGLPVAGGGESSESEDDGW) are disordered. Ser17, Ser18, and Ser20 each carry phosphoserine. 6 ANK repeats span residues 45–74 (EKKEKFKKAMTIGDVSLVQELLDSGISVDS), 78–107 (YGWTPLMYAASVANAELVRVLLDRGANASF), 110–144 (DKQSILITACSAHGSEELILKCVELLLSRNADPNV), 148–177 (RLMTPIMYAARDGHTQVVALLVAHGAEVNT), 181–210 (NGYTALTWAARQGHKNIVLKLLELGANKML), and 214–243 (DGKMPSEIAKRNKHHEIFNLLSFTLNPLEG). Residues 272 to 334 (SYTAFGDLEV…KILAALKELQ (63 aa)) enclose the SAM domain.

As to quaternary structure, interacts with DDX4, PIWIL1, RANBP9 and TDRD1.

It is found in the cytoplasm. Functionally, plays a central role during spermatogenesis by repressing transposable elements and preventing their mobilization, which is essential for the germline integrity. Acts via the piRNA metabolic process, which mediates the repression of transposable elements during meiosis by forming complexes composed of piRNAs and Piwi proteins and governs the methylation and subsequent repression of transposons. Its association with pi-bodies suggests a participation in the primary piRNAs metabolic process. Required prior to the pachytene stage to facilitate the production of multiple types of piRNAs, including those associated with repeats involved in the regulation of retrotransposons. May act by mediating protein-protein interactions during germ cell maturation. The chain is Ankyrin repeat, SAM and basic leucine zipper domain-containing protein 1 (ASZ1) from Nomascus leucogenys (Northern white-cheeked gibbon).